The primary structure comprises 335 residues: Anthranilate phosphoribosyltransferase (335 aa).

5-phospho-alpha-D-ribose 1-diphosphate is bound by residues Gly-79, 82-83, Thr-87, 89-92, 107-115, and Ser-119; these read GD, NVST, and KHCNKGVSS. Residue Gly-79 coordinates anthranilate. Ser-91 contacts Mg(2+). Asn-110 lines the anthranilate pocket. Arg-165 lines the anthranilate pocket. Mg(2+) contacts are provided by Asp-223 and Glu-224.

Belongs to the anthranilate phosphoribosyltransferase family. As to quaternary structure, homodimer. Mg(2+) is required as a cofactor.

It carries out the reaction N-(5-phospho-beta-D-ribosyl)anthranilate + diphosphate = 5-phospho-alpha-D-ribose 1-diphosphate + anthranilate. Its pathway is amino-acid biosynthesis; L-tryptophan biosynthesis; L-tryptophan from chorismate: step 2/5. Functionally, catalyzes the transfer of the phosphoribosyl group of 5-phosphorylribose-1-pyrophosphate (PRPP) to anthranilate to yield N-(5'-phosphoribosyl)-anthranilate (PRA). This Buchnera aphidicola subsp. Schizaphis graminum (strain Sg) protein is Anthranilate phosphoribosyltransferase.